Consider the following 118-residue polypeptide: Holo-[acyl-carrier-protein] synthase (118 aa).

Residues D8 and E58 each coordinate Mg(2+).

Belongs to the P-Pant transferase superfamily. AcpS family. The cofactor is Mg(2+).

It localises to the cytoplasm. The enzyme catalyses apo-[ACP] + CoA = holo-[ACP] + adenosine 3',5'-bisphosphate + H(+). In terms of biological role, transfers the 4'-phosphopantetheine moiety from coenzyme A to a Ser of acyl-carrier-protein. This is Holo-[acyl-carrier-protein] synthase from Streptococcus pyogenes serotype M28 (strain MGAS6180).